Consider the following 210-residue polypeptide: 7-cyano-7-deazaguanine synthase 2 (210 aa).

Residue 10-20 participates in ATP binding; it reads HSGGMDSTTCL. 4 residues coordinate Zn(2+): Cys-180, Cys-193, Cys-196, and Cys-199.

It belongs to the QueC family. Zn(2+) is required as a cofactor.

The catalysed reaction is 7-carboxy-7-deazaguanine + NH4(+) + ATP = 7-cyano-7-deazaguanine + ADP + phosphate + H2O + H(+). Its pathway is purine metabolism; 7-cyano-7-deazaguanine biosynthesis. Catalyzes the ATP-dependent conversion of 7-carboxy-7-deazaguanine (CDG) to 7-cyano-7-deazaguanine (preQ(0)). The protein is 7-cyano-7-deazaguanine synthase 2 of Rhodopseudomonas palustris (strain HaA2).